The primary structure comprises 596 residues: (E)-beta-ocimene synthase, chloroplastic (596 aa).

A chloroplast-targeting transit peptide spans 1-35; that stretch reads MAITHYQMASFQSSFHFCMLRKTLRQKSSLHFAKR. Arg-307, Asp-344, Asp-348, Arg-485, and Asn-488 together coordinate (2E)-geranyl diphosphate. The Mg(2+) site is built by Asp-344 and Asp-348. The DDXXD motif signature appears at 344-348; it reads DDIYD. Mg(2+) contacts are provided by Asn-488, Ala-492, and Glu-496.

The protein belongs to the terpene synthase family. Tpsb subfamily. The cofactor is Mg(2+). Mn(2+) serves as cofactor. As to expression, highly expressed in leaves, stems and disk florets. Detected in roots.

It localises to the plastid. The protein resides in the chloroplast. The catalysed reaction is (2E)-geranyl diphosphate = (E)-beta-ocimene + diphosphate. Its pathway is secondary metabolite biosynthesis; terpenoid biosynthesis. Functionally, monoterpene synthase involved in the biosynthesis of (E)-beta-ocimene as the major product and trace amounts of (Z)-beta-ocimene. Can only accept geranyl diphosphate as substrate. The chain is (E)-beta-ocimene synthase, chloroplastic from Matricaria chamomilla var. recutita (German chamomile).